Consider the following 392-residue polypeptide: MNQPKSPITVLIVDDSPFMRLTLQKILSQDPEIKVLDTARDGKEGIEKLQALRPQVVTMDIEMPQIDGLQALGEIMRWQPTPIIILSALTTEGAQASVKALEAGAFDVVAKPSGGPGADIQALARDLIDKVKAAAQVNLGRLGKKGAVSRISSASGSRPPWTAGAASENTNRLSSPGSTSSTLGSAKGRSLDSGEALPKYPVEIVAIGTSTGGPSALQAVLTQLPGNLPVPVLVAQHMPPGFTAPLAQRLNGMSPLTIREGVHGEALKAGTIYFAPAGKQMQVQSRGSQLILHIGDESPITTLYHPSVDVMFMSLAKEVGKGTLGVVMTGMGNDGLRGMREIKERGGYAIAEAEETCVVYGMPRAIVDAGLANRVAPLGEIARHIVECVQRR.

The Response regulatory domain occupies 9–126 (TVLIVDDSPF…GADIQALARD (118 aa)). Asp60 is modified (4-aspartylphosphate). The segment at 148-194 (VSRISSASGSRPPWTAGAASENTNRLSSPGSTSSTLGSAKGRSLDSG) is disordered. A compositionally biased stretch (low complexity) spans 173-185 (LSSPGSTSSTLGS). One can recognise a CheB-type methylesterase domain in the interval 198–392 (PKYPVEIVAI…RHIVECVQRR (195 aa)). Active-site residues include Ser210, His237, and Asp334.

Belongs to the CheB family. In terms of processing, phosphorylated by CheA. Phosphorylation of the N-terminal regulatory domain activates the methylesterase activity.

Its subcellular location is the cytoplasm. It catalyses the reaction [protein]-L-glutamate 5-O-methyl ester + H2O = L-glutamyl-[protein] + methanol + H(+). The enzyme catalyses L-glutaminyl-[protein] + H2O = L-glutamyl-[protein] + NH4(+). Involved in chemotaxis. Part of a chemotaxis signal transduction system that modulates chemotaxis in response to various stimuli. Catalyzes the demethylation of specific methylglutamate residues introduced into the chemoreceptors (methyl-accepting chemotaxis proteins or MCP) by CheR. Also mediates the irreversible deamidation of specific glutamine residues to glutamic acid. This is Protein-glutamate methylesterase/protein-glutamine glutaminase from Desulfitobacterium hafniense (strain Y51).